A 776-amino-acid chain; its full sequence is Mitochondrial intermediate peptidase (776 aa).

A mitochondrion-targeting transit peptide spans 1 to 28 (MFVRFYKRLDRQYIQSQRRWILSSNKCL). The disordered stretch occupies residues 48–71 (DHWEESQAQNTSSEQDNKGKNSSY). Polar residues predominate over residues 53–71 (SQAQNTSSEQDNKGKNSSY). H567 lines the Zn(2+) pocket. Residue E568 is part of the active site. H571 and H574 together coordinate Zn(2+).

It belongs to the peptidase M3 family. Zn(2+) is required as a cofactor.

Its subcellular location is the mitochondrion matrix. The enzyme catalyses Release of an N-terminal octapeptide as second stage of processing of some proteins imported into the mitochondrion.. Cleaves proteins, imported into the mitochondrion, to their mature size. While most mitochondrial precursor proteins are processed to the mature form in one step by mitochondrial processing peptidase (MPP), the sequential cleavage by MIP of an octapeptide after initial processing by MPP is a required step for a subgroup of nuclear-encoded precursor proteins destined for the matrix or the inner membrane. The polypeptide is Mitochondrial intermediate peptidase (OCT1) (Eremothecium gossypii (strain ATCC 10895 / CBS 109.51 / FGSC 9923 / NRRL Y-1056) (Yeast)).